We begin with the raw amino-acid sequence, 152 residues long: Deoxyuridine 5'-triphosphate nucleotidohydrolase (152 aa).

Substrate is bound by residues 71–73 (RSG), Asn-84, 88–90 (LID), and Met-98.

It belongs to the dUTPase family. As to quaternary structure, homotrimer. Mg(2+) is required as a cofactor.

It carries out the reaction dUTP + H2O = dUMP + diphosphate + H(+). The protein operates within pyrimidine metabolism; dUMP biosynthesis; dUMP from dCTP (dUTP route): step 2/2. In terms of biological role, this enzyme is involved in nucleotide metabolism: it produces dUMP, the immediate precursor of thymidine nucleotides and it decreases the intracellular concentration of dUTP so that uracil cannot be incorporated into DNA. The protein is Deoxyuridine 5'-triphosphate nucleotidohydrolase of Escherichia coli O1:K1 / APEC.